The primary structure comprises 441 residues: Xaa-Pro dipeptidase (441 aa).

D244, D255, H336, E381, and E420 together coordinate Mn(2+).

It belongs to the peptidase M24B family. Bacterial-type prolidase subfamily. Mn(2+) serves as cofactor.

It carries out the reaction Xaa-L-Pro dipeptide + H2O = an L-alpha-amino acid + L-proline. Splits dipeptides with a prolyl residue in the C-terminal position. In Xanthomonas campestris pv. campestris (strain B100), this protein is Xaa-Pro dipeptidase.